We begin with the raw amino-acid sequence, 222 residues long: Thiamine-phosphate synthase (222 aa).

4-amino-2-methyl-5-(diphosphooxymethyl)pyrimidine contacts are provided by residues 44 to 48 (QFREK) and Asn79. Mg(2+) contacts are provided by Asp80 and Asp99. Ser117 contacts 4-amino-2-methyl-5-(diphosphooxymethyl)pyrimidine. 143–145 (TET) is a binding site for 2-[(2R,5Z)-2-carboxy-4-methylthiazol-5(2H)-ylidene]ethyl phosphate. Lys146 is a 4-amino-2-methyl-5-(diphosphooxymethyl)pyrimidine binding site. Residues Gly175 and 195 to 196 (IS) contribute to the 2-[(2R,5Z)-2-carboxy-4-methylthiazol-5(2H)-ylidene]ethyl phosphate site.

This sequence belongs to the thiamine-phosphate synthase family. In terms of assembly, monomer. Mg(2+) is required as a cofactor.

The enzyme catalyses 2-[(2R,5Z)-2-carboxy-4-methylthiazol-5(2H)-ylidene]ethyl phosphate + 4-amino-2-methyl-5-(diphosphooxymethyl)pyrimidine + 2 H(+) = thiamine phosphate + CO2 + diphosphate. It carries out the reaction 2-(2-carboxy-4-methylthiazol-5-yl)ethyl phosphate + 4-amino-2-methyl-5-(diphosphooxymethyl)pyrimidine + 2 H(+) = thiamine phosphate + CO2 + diphosphate. The catalysed reaction is 4-methyl-5-(2-phosphooxyethyl)-thiazole + 4-amino-2-methyl-5-(diphosphooxymethyl)pyrimidine + H(+) = thiamine phosphate + diphosphate. It functions in the pathway cofactor biosynthesis; thiamine diphosphate biosynthesis; thiamine phosphate from 4-amino-2-methyl-5-diphosphomethylpyrimidine and 4-methyl-5-(2-phosphoethyl)-thiazole: step 1/1. In terms of biological role, condenses 4-methyl-5-(beta-hydroxyethyl)thiazole monophosphate (THZ-P) and 2-methyl-4-amino-5-hydroxymethyl pyrimidine pyrophosphate (HMP-PP) to form thiamine monophosphate (TMP). Is also able to use the 2-methoxy analog MeO-HMP-PP, as substrate in vitro, but not the 2-trifluoromethyl analog CF(3)-HMP-PP. The sequence is that of Thiamine-phosphate synthase (thiE) from Bacillus subtilis (strain 168).